The sequence spans 400 residues: Acetate kinase (400 aa).

Mg(2+) is bound at residue Asn-10. Lys-17 contacts ATP. A substrate-binding site is contributed by Arg-91. Catalysis depends on Asp-148, which acts as the Proton donor/acceptor. Residues 208–212, 283–285, and 331–335 each bind ATP; these read HLGNG, DCR, and GIGEN. Glu-385 is a binding site for Mg(2+).

It belongs to the acetokinase family. As to quaternary structure, homodimer. The cofactor is Mg(2+). Requires Mn(2+) as cofactor.

It is found in the cytoplasm. It carries out the reaction acetate + ATP = acetyl phosphate + ADP. Its pathway is metabolic intermediate biosynthesis; acetyl-CoA biosynthesis; acetyl-CoA from acetate: step 1/2. Catalyzes the formation of acetyl phosphate from acetate and ATP. Can also catalyze the reverse reaction. The sequence is that of Acetate kinase from Shewanella frigidimarina (strain NCIMB 400).